We begin with the raw amino-acid sequence, 255 residues long: MTFLAIDVGNTRLKWALYTHPHRDAPLLAQGAEFLDNIDKLADGAWATLTPPTHMLGCIVAGDAVRRRVEAQMELWDVAPQWVVASAGEAGLTNGYDYPARLGADRWVAMIGAWHHAFSTGPARPLVVVMVGTAVTVDAIDASGKFLGGLILPGHGIMLRALESGTAGLHVPTGEVREFPTNTSDALTSGGTFAIAGAVNCMVQHLRDHCGTEPKCIMAGGAGWKMAPSMSVQFELVDNLIFDGLLEMAARRFID.

ATP is bound at residue 7–14 (DVGNTRLK). Substrate contacts are provided by residues tyrosine 96 and 103-106 (GADR). The Proton acceptor role is filled by aspartate 105. Position 133 (threonine 133) interacts with ATP. Substrate is bound at residue threonine 183.

It belongs to the type III pantothenate kinase family. Homodimer. The cofactor is NH4(+). K(+) is required as a cofactor.

It is found in the cytoplasm. The catalysed reaction is (R)-pantothenate + ATP = (R)-4'-phosphopantothenate + ADP + H(+). Its pathway is cofactor biosynthesis; coenzyme A biosynthesis; CoA from (R)-pantothenate: step 1/5. Catalyzes the phosphorylation of pantothenate (Pan), the first step in CoA biosynthesis. This is Type III pantothenate kinase from Albidiferax ferrireducens (strain ATCC BAA-621 / DSM 15236 / T118) (Rhodoferax ferrireducens).